A 424-amino-acid chain; its full sequence is Sulfate adenylyltransferase (424 aa).

This sequence belongs to the sulfate adenylyltransferase family.

The enzyme catalyses sulfate + ATP + H(+) = adenosine 5'-phosphosulfate + diphosphate. It functions in the pathway sulfur metabolism; hydrogen sulfide biosynthesis; sulfite from sulfate: step 1/3. The polypeptide is Sulfate adenylyltransferase (Desulfatibacillum aliphaticivorans).